Consider the following 304-residue polypeptide: uncharacterized protein (304 aa).

The N-terminal stretch at 1 to 15 is a signal peptide; that stretch reads MTRPRPPLGPAMAGA. Residues 28 to 151 form the Thioredoxin domain; the sequence is NAAASTDADR…LSRWVDSLLS (124 aa).

This is an uncharacterized protein from Mycobacterium bovis (strain ATCC BAA-935 / AF2122/97).